Here is a 195-residue protein sequence, read N- to C-terminus: Thioredoxin reductase-like selenoprotein T (195 aa).

An N-terminal signal peptide occupies residues 1-19; the sequence is MRLLLLLLVAASAVVRSDA. Residues 46-49 constitute a cross-link (cysteinyl-selenocysteine (Cys-Sec)); the sequence is CVSU. A non-standard amino acid (selenocysteine) is located at residue Sec-49. Residues 85–103 traverse the membrane as a helical segment; that stretch reads IASFLSVFKLVLIGLIIVG.

It belongs to the SelWTH family. Selenoprotein T subfamily. May contain a selenide-sulfide bond between Cys-46 and Sec-49. This bond is speculated to serve as redox-active pair.

The protein localises to the endoplasmic reticulum membrane. It catalyses the reaction [thioredoxin]-dithiol + NADP(+) = [thioredoxin]-disulfide + NADPH + H(+). In terms of biological role, selenoprotein with thioredoxin reductase-like oxidoreductase activity. Protects dopaminergic neurons against oxidative stress and cell death. Involved in ADCYAP1/PACAP-induced calcium mobilization and neuroendocrine secretion. Plays a role in fibroblast anchorage and redox regulation. In gastric smooth muscle, modulates the contraction processes through the regulation of calcium release and MYLK activation. In pancreatic islets, involved in the control of glucose homeostasis, contributes to prolonged ADCYAP1/PACAP-induced insulin secretion. The protein is Thioredoxin reductase-like selenoprotein T of Bos taurus (Bovine).